The chain runs to 180 residues: Fanconi anemia core complex-associated protein 20 (180 aa).

Residues 1–17 (MEAARRPRLGLSRRRPR) show a composition bias toward basic residues. Disordered regions lie at residues 1–28 (MEAARRPRLGLSRRRPRPAGGPSGGRPW) and 106–135 (GAGGHLESPARSLPQRPAPDPCRAPRVEQQ). A phosphoserine mark is found at Ser113 and Ser137. The UBZ2-type zinc finger occupies 144–180 (LRSCPMCQKEFAPRLTQLDVDSHLAQCLAESTEDVTW). Zn(2+) is bound by residues Cys147, Cys150, His166, and Cys170.

As to quaternary structure, component of the Fanconi anemia (FA) complex. Interacts with FANCA; interaction is direct. Interacts with REV1. Reported to bind monoubiquitinated REV1; however it binds better to non-ubiquitinated REV1.

The protein localises to the nucleus. It localises to the chromosome. Functionally, component of the Fanconi anemia (FA) complex required to recruit the FA complex to DNA interstrand cross-links (ICLs) and promote ICLs repair. Following DNA damage recognizes and binds 'Lys-63'-linked ubiquitin generated by RNF8 at ICLs and recruits other components of the FA complex. Promotes translesion synthesis via interaction with REV1. The sequence is that of Fanconi anemia core complex-associated protein 20 from Homo sapiens (Human).